Consider the following 461-residue polypeptide: Dihydrolipoyl dehydrogenase (461 aa).

FAD is bound by residues 33–41 (EAAEVGGVC), Lys50, and Ala112. A disulfide bond links Cys41 and Cys46. Residues 173 to 177 (GGGAV), Glu196, and 263 to 266 (AVGR) each bind NAD(+). FAD is bound by residues Asp306 and Ala314. Residue His437 is the Proton acceptor of the active site.

The protein belongs to the class-I pyridine nucleotide-disulfide oxidoreductase family. As to quaternary structure, homodimer. FAD is required as a cofactor.

The protein resides in the membrane. It catalyses the reaction N(6)-[(R)-dihydrolipoyl]-L-lysyl-[protein] + NAD(+) = N(6)-[(R)-lipoyl]-L-lysyl-[protein] + NADH + H(+). In terms of biological role, has chromate reductase activity. The polypeptide is Dihydrolipoyl dehydrogenase (Thermus scotoductus (strain ATCC 700910 / SA-01)).